The following is a 296-amino-acid chain: Putative peptide transport system permease protein BRA1093/BS1330_II1085 (296 aa).

6 helical membrane-spanning segments follow: residues 35-55 (IGLVLLLIVVLAAVLAPWITN), 97-117 (LWIGLTVAVLSAILGAIIGIA), 131-151 (VMDALMAFPAILLAIGISAAL), 205-225 (ILPNCLAPLLVTLTFVFAYAI), 229-249 (ATLSFLGIGTPPPHASWGSIV), and 260-280 (WWIMLFPGIAITISALAINLI). One can recognise an ABC transmembrane type-1 domain in the interval 97–281 (LWIGLTVAVL…ISALAINLIG (185 aa)).

The protein belongs to the binding-protein-dependent transport system permease family. The complex is composed of two ATP-binding proteins (BRA1094), two transmembrane proteins (BRA1092 and BRA1093) and a solute-binding protein (BRA1090).

It localises to the cell inner membrane. In terms of biological role, probably part of an ABC transporter complex that could be involved in peptide import. Probably responsible for the translocation of the substrate across the membrane. This is Putative peptide transport system permease protein BRA1093/BS1330_II1085 from Brucella suis biovar 1 (strain 1330).